The following is a 208-amino-acid chain: Ribonuclease HII (208 aa).

Residues 17–208 enclose the RNase H type-2 domain; it reads LRVCGIDEAG…SFRLRQLGEK (192 aa). Aspartate 23, glutamate 24, and aspartate 120 together coordinate a divalent metal cation.

This sequence belongs to the RNase HII family. Requires Mn(2+) as cofactor. Mg(2+) serves as cofactor.

It is found in the cytoplasm. The enzyme catalyses Endonucleolytic cleavage to 5'-phosphomonoester.. Its function is as follows. Endonuclease that specifically degrades the RNA of RNA-DNA hybrids. This chain is Ribonuclease HII, found in Chlorobium luteolum (strain DSM 273 / BCRC 81028 / 2530) (Pelodictyon luteolum).